The chain runs to 56 residues: MVQNDFVDSYDVTMLLQDDDGKQYYEYHKGLSLSDFEVLYGNTADEIIKLRLDKVL.

The protein belongs to the phi29likevirus protein p56 family. Homodimer. Interacts with host UDG; this interaction inhibits the uracil-DNA glycosylase.

Its function is as follows. Inhibits the host uracil-DNA glycosylase (UDG), an enzyme which removes uracil residues from DNA by the base excision repair. Interacts with host uracil-DNA glycosylase and prevents the latter from binding to DNA. Since the viral DNA polymerase efficiently incorporates dUMP into DNA, the virus needs to prevent the deleterious effect caused by host UDG when it eliminates uracil residues present in the viral genome. The protein is Protein p56 of Bacillus phage phi29 (Bacteriophage phi-29).